The following is a 197-amino-acid chain: Protein GrpE (197 aa).

Residues 1–41 (MSSKEQKTPEGQAPEEIITEQHEEVEAVEPDASAEQVDPRD) form a disordered region.

It belongs to the GrpE family. In terms of assembly, homodimer.

Its subcellular location is the cytoplasm. In terms of biological role, participates actively in the response to hyperosmotic and heat shock by preventing the aggregation of stress-denatured proteins, in association with DnaK and GrpE. It is the nucleotide exchange factor for DnaK and may function as a thermosensor. Unfolded proteins bind initially to DnaJ; upon interaction with the DnaJ-bound protein, DnaK hydrolyzes its bound ATP, resulting in the formation of a stable complex. GrpE releases ADP from DnaK; ATP binding to DnaK triggers the release of the substrate protein, thus completing the reaction cycle. Several rounds of ATP-dependent interactions between DnaJ, DnaK and GrpE are required for fully efficient folding. In Enterobacter sp. (strain 638), this protein is Protein GrpE.